The chain runs to 119 residues: Probable cyclase otaY (119 aa).

Belongs to the aurE cyclase family.

The protein operates within mycotoxin biosynthesis. Functionally, probable cyclase; part of the gene cluster that mediates the biosynthesis of ochratoxin A (OTA), a mycotoxin composed of a chlorinated type I polyketide dihydroisocoumarin moiety linked to L-phenylalanine, and demonstrated to have nephrotoxic, immunotoxic, genotoxic, neurotoxic, and teratogenic properties. OtaY is probably involved in the polyketide cyclization. The pathway begins with the highly reducing polyketide synthase otaA that catalyzes the formation of the isocoumarin group during the initial stages of biosynthesis, starting from one acetate and 4 malonate units, to originate the characteristic pentaketide skeleton 7-methylmellein (7-MM) of the OTA molecule. The newly identified cyclase otaY might be involved in the polyketide cyclization reaction during the initial steps of the OTA biosynthesis. 7-MM is then oxidized into 7-carboxymellein (also called ochratoxin beta) by the cytochrome P450 monooxygenase otaC. The NRPS encoded by the otaB gene is involved in the linking of phenylalanine to the dihydroisocoumarin ring. The reaction catalyzed by NRPS results in the production of ochratoxin B (OTB), which is the non-chlorinated analog of OTA and which subsequently serves as the substrate of the halogenase otaD for chlorination activity to form the final molecular structure of OTA, containing a chlorine atom in the C-5 position of the molecule. This chain is Probable cyclase otaY, found in Aspergillus niger (strain ATCC MYA-4892 / CBS 513.88 / FGSC A1513).